We begin with the raw amino-acid sequence, 172 residues long: ATP synthase subunit b, chloroplastic (172 aa).

Residues 15-37 form a helical membrane-spanning segment; that stretch reads ILATNLINLSAVLGVLIFFGKGV.

The protein belongs to the ATPase B chain family. In terms of assembly, F-type ATPases have 2 components, F(1) - the catalytic core - and F(0) - the membrane proton channel. F(1) has five subunits: alpha(3), beta(3), gamma(1), delta(1), epsilon(1). F(0) has four main subunits: a(1), b(1), b'(1) and c(10-14). The alpha and beta chains form an alternating ring which encloses part of the gamma chain. F(1) is attached to F(0) by a central stalk formed by the gamma and epsilon chains, while a peripheral stalk is formed by the delta, b and b' chains.

The protein resides in the plastid. The protein localises to the chloroplast thylakoid membrane. F(1)F(0) ATP synthase produces ATP from ADP in the presence of a proton or sodium gradient. F-type ATPases consist of two structural domains, F(1) containing the extramembraneous catalytic core and F(0) containing the membrane proton channel, linked together by a central stalk and a peripheral stalk. During catalysis, ATP synthesis in the catalytic domain of F(1) is coupled via a rotary mechanism of the central stalk subunits to proton translocation. Its function is as follows. Component of the F(0) channel, it forms part of the peripheral stalk, linking F(1) to F(0). This is ATP synthase subunit b, chloroplastic from Pisum sativum (Garden pea).